Reading from the N-terminus, the 510-residue chain is NAD(P)H-quinone oxidoreductase subunit 2 A, chloroplastic (510 aa).

Transmembrane regions (helical) follow at residues 24–44 (LLLFNGSFIFPECILIFGLIL), 59–79 (WFYFISSTCLVISITALLFRW), 99–119 (IFQFLILLCSTLCIPLSVEYI), 124–144 (MAITEFLLFVLTATLGGMFLC), 149–169 (LITIFVAPECFSLCSYLLSGY), 183–203 (YLLMGGAGSSILVHGFSWLYG), 229–249 (ISLALISITVGLGFKLSPAPF), 295–315 (WHLLLEILAILSMILGNLLAI), 323–343 (MLAYSSIGQIGYVIIGIIVGD), 354–374 (YMLFYISMNLGTFACIVLFGL), 395–415 (ALSLALCLLSLGGLPPLAGFF), and 418–438 (LYLFWCGWQAGLYFLVSIGLL).

Belongs to the complex I subunit 2 family. NDH is composed of at least 16 different subunits, 5 of which are encoded in the nucleus.

It localises to the plastid. The protein resides in the chloroplast thylakoid membrane. It carries out the reaction a plastoquinone + NADH + (n+1) H(+)(in) = a plastoquinol + NAD(+) + n H(+)(out). It catalyses the reaction a plastoquinone + NADPH + (n+1) H(+)(in) = a plastoquinol + NADP(+) + n H(+)(out). In terms of biological role, NDH shuttles electrons from NAD(P)H:plastoquinone, via FMN and iron-sulfur (Fe-S) centers, to quinones in the photosynthetic chain and possibly in a chloroplast respiratory chain. The immediate electron acceptor for the enzyme in this species is believed to be plastoquinone. Couples the redox reaction to proton translocation, and thus conserves the redox energy in a proton gradient. This chain is NAD(P)H-quinone oxidoreductase subunit 2 A, chloroplastic, found in Triticum aestivum (Wheat).